Here is a 789-residue protein sequence, read N- to C-terminus: Bifunctional purine biosynthetic protein PUR2,5 (789 aa).

Residues 1–428 (MEKINVLVVG…NRTDIAHRAF (428 aa)) form a GARS region. Residues 114-321 (KDFMKKHNIP…LLELMLATVE (208 aa)) form the ATP-grasp domain. ATP is bound at residue 140 to 201 (IANSSHNLVI…EEFLEGDELS (62 aa)). Positions 291 and 293 each coordinate Mg(2+). Residues 438-773 (LTYEDAGVSV…TVYTIGKLVE (336 aa)) form an AIRS region.

It in the N-terminal section; belongs to the GARS family. In the C-terminal section; belongs to the AIR synthase family. Mg(2+) is required as a cofactor. It depends on Mn(2+) as a cofactor.

Its subcellular location is the cytoplasm. The protein localises to the cytosol. It carries out the reaction 2-formamido-N(1)-(5-O-phospho-beta-D-ribosyl)acetamidine + ATP = 5-amino-1-(5-phospho-beta-D-ribosyl)imidazole + ADP + phosphate + H(+). The enzyme catalyses 5-phospho-beta-D-ribosylamine + glycine + ATP = N(1)-(5-phospho-beta-D-ribosyl)glycinamide + ADP + phosphate + H(+). The protein operates within purine metabolism; IMP biosynthesis via de novo pathway; 5-amino-1-(5-phospho-D-ribosyl)imidazole from N(2)-formyl-N(1)-(5-phospho-D-ribosyl)glycinamide: step 2/2. It functions in the pathway purine metabolism; IMP biosynthesis via de novo pathway; N(1)-(5-phospho-D-ribosyl)glycinamide from 5-phospho-alpha-D-ribose 1-diphosphate: step 2/2. Functionally, catalyzes the second and fifth step in the 'de novo' purine biosynthesis pathway; contains phosphoribosylamine--glycine ligase (GARS) and phosphoribosylformylglycinamidine cyclo-ligase (AIRS) activities. This is Bifunctional purine biosynthetic protein PUR2,5 from Pichia angusta (Yeast).